We begin with the raw amino-acid sequence, 204 residues long: Signal peptidase I (204 aa).

Over 1-10 (MNSFKNFLKE) the chain is Cytoplasmic. Residues 11–30 (WGLFLLILSLLALSRIFFWS) form a helical membrane-spanning segment. The Extracellular portion of the chain corresponds to 31-204 (NVRVEGHSMD…LWPITRIGTF (174 aa)). Residues S38 and K76 contribute to the active site.

It belongs to the peptidase S26 family.

Its subcellular location is the cell membrane. The enzyme catalyses Cleavage of hydrophobic, N-terminal signal or leader sequences from secreted and periplasmic proteins.. This Streptococcus pneumoniae serotype 4 (strain ATCC BAA-334 / TIGR4) protein is Signal peptidase I (lepB).